The primary structure comprises 256 residues: DNA repair protein RecO (256 aa).

The protein belongs to the RecO family.

Functionally, involved in DNA repair and RecF pathway recombination. In Streptococcus pneumoniae serotype 2 (strain D39 / NCTC 7466), this protein is DNA repair protein RecO.